The primary structure comprises 299 residues: Taste receptor type 2 member 50 (299 aa).

Position 1 (Met1) is a topological domain, extracellular. The chain crosses the membrane as a helical span at residues 2–22; that stretch reads VTFLHIFFSILILVLFVLGNF. Residues 23–55 are Cytoplasmic-facing; that stretch reads ANGFIALVNFIDLVKRKKISSADQILTALAVSR. A helical membrane pass occupies residues 56–76; sequence IGLLWALLLNWYLTVLNPAFY. Residues 77–87 are Extracellular-facing; that stretch reads SVELRITSYNA. The chain crosses the membrane as a helical span at residues 88 to 108; that stretch reads WVVTNHFSMWLAASLSIFYLL. Over 109 to 126 the chain is Cytoplasmic; sequence KIANFSNLIFLHLKRRVR. Residues 127-147 form a helical membrane-spanning segment; it reads SVILVILLGPLTFLVCHLFVA. Residues 148–181 lie on the Extracellular side of the membrane; that stretch reads NMDESMSAEEYEGNMTGKLKLRNTVHLSYLTVTT. Asn161 carries N-linked (GlcNAc...) asparagine glycosylation. Residues 182–202 traverse the membrane as a helical segment; the sequence is LWSFIPFTLSLISFLMLICSL. The Cytoplasmic segment spans residues 203–229; that stretch reads CKHVKKMQLHGEGSQDLSTKVHIKALQ. Residues 230–250 form a helical membrane-spanning segment; sequence TLISFLLLCAIFFLFLIISIW. Topologically, residues 251–259 are extracellular; sequence NPRRLQNDP. A helical transmembrane segment spans residues 260–280; the sequence is VVVVSKAVGNIYLALDSFILI. Residues 281–299 lie on the Cytoplasmic side of the membrane; the sequence is WRTKKLKHTFLLILCQIRC.

It belongs to the G-protein coupled receptor T2R family.

The protein resides in the membrane. Its function is as follows. Receptor that may play a role in the perception of bitterness and is gustducin-linked. May play a role in sensing the chemical composition of the gastrointestinal content. The activity of this receptor may stimulate alpha gustducin, mediate PLC-beta-2 activation and lead to the gating of TRPM5. This chain is Taste receptor type 2 member 50 (TAS2R50), found in Pongo pygmaeus (Bornean orangutan).